The following is a 337-amino-acid chain: UPF0252 protein PH1321 (337 aa).

The helical transmembrane segment at 100 to 120 (IIGMLFLVFIILPAITSNLWS) threads the bilayer.

The protein belongs to the UPF0252 family.

Its subcellular location is the membrane. The polypeptide is UPF0252 protein PH1321 (Pyrococcus horikoshii (strain ATCC 700860 / DSM 12428 / JCM 9974 / NBRC 100139 / OT-3)).